Consider the following 813-residue polypeptide: Histone acetyltransferase KAT2B (813 aa).

Disordered regions lie at residues 1-55 (MAEA…GGSA) and 380-423 (NSTS…EAKR). Positions 32-46 (ASCGPATAVAAAGTA) are enriched in low complexity. Residues 380-391 (NSTSHEQINGGR) show a composition bias toward polar residues. Positions 406-423 (PGEKRKMNNSHAPEEAKR) are enriched in basic and acidic residues. An N-acetyltransferase domain is found at 484 to 632 (LNQKPNKKIL…GATLMGCELN (149 aa)). The Proton donor/acceptor role is filled by Glu551. Acetyl-CoA is bound by residues 555-557 (CAV), 562-568 (QVKGYGT), and 593-596 (YAIG). The 105-residue stretch at 704 to 808 (KDPEQLYSTL…KFFFSKIKEA (105 aa)) folds into the Bromo domain.

The protein belongs to the acetyltransferase family. GCN5 subfamily. Interacts with BCAS3. Interacts with SIRT1. Interacts with EP300, CREBBP and DDX17. Component of a large chromatin remodeling complex, at least composed of MYSM1, KAT2B/PCAF, RBM10 and KIF11/TRIP5. Interacts with KLF1; the interaction does not acetylate KLF1 and there is no enhancement of its transactivational activity. Interacts with NFE4. Interacts with MECOM. Interacts with NR2C2 (hypophosphorylated and unsumoylated form); the interaction promotes the transactivation activity of NR2C2. Interacts with NFE4. Interacts with MECOM. Interacts with E2F1; the interaction acetylates E2F1 augmenting its DNA-binding and transcriptional activity. Interacts with NPAS2, BMAL1 and CLOCK. Interacts (unsumoylated form) with NR2C1; the interaction promotes transactivation activity. Interacts with CEBPB. Interacts with NR4A3. Interacts with TBX5. Interacts with PLK4. Interacts with RB1; this interaction leads to RB1 acetylation. Interacts with VRK1.

It is found in the nucleus. The protein localises to the cytoplasm. The protein resides in the cytoskeleton. It localises to the microtubule organizing center. Its subcellular location is the centrosome. The catalysed reaction is L-lysyl-[histone] + acetyl-CoA = N(6)-acetyl-L-lysyl-[histone] + CoA + H(+). It carries out the reaction L-lysyl-[protein] + acetyl-CoA = N(6)-acetyl-L-lysyl-[protein] + CoA + H(+). The enzyme catalyses spermidine + acetyl-CoA = N(8)-acetylspermidine + CoA + H(+). In terms of biological role, functions as a histone acetyltransferase (HAT) to promote transcriptional activation. Has significant histone acetyltransferase activity with core histones (H3 and H4), and also with nucleosome core particles. Has a a strong preference for acetylation of H3 at 'Lys-9' (H3K9ac). Also acetylates non-histone proteins, such as ACLY, MAPRE1/EB1, PLK4, RRP9/U3-55K and TBX5. Acts as a circadian transcriptional coactivator which enhances the activity of the circadian transcriptional activators: NPAS2-BMAL1 and CLOCK-BMAL1 heterodimers. Involved in heart and limb development by mediating acetylation of TBX5, acetylation regulating nucleocytoplasmic shuttling of TBX5. Acts as a negative regulator of centrosome amplification by mediating acetylation of PLK4. Acetylates RRP9/U3-55K, a core subunit of the U3 snoRNP complex, impairing pre-rRNA processing. Acetylates MAPRE1/EB1, promoting dynamic kinetochore-microtubule interactions in early mitosis. Also acetylates spermidine. The chain is Histone acetyltransferase KAT2B from Mus musculus (Mouse).